The following is a 456-amino-acid chain: uncharacterized protein (456 aa).

Residues 3 to 61 (LMRKNETREFLIEDIEFPAVGVAFYNDKKVYIKGAVPGQKVLARVSKVRREKIEAKLKE) form the TRAM domain. Cys-74, Cys-80, Cys-83, and Cys-163 together coordinate [4Fe-4S] cluster. The S-adenosyl-L-methionine site is built by Gln-289, Tyr-318, Glu-339, and Asp-384. Cys-411 functions as the Nucleophile in the catalytic mechanism.

It belongs to the class I-like SAM-binding methyltransferase superfamily. RNA M5U methyltransferase family.

This is an uncharacterized protein from Clostridium acetobutylicum (strain ATCC 824 / DSM 792 / JCM 1419 / IAM 19013 / LMG 5710 / NBRC 13948 / NRRL B-527 / VKM B-1787 / 2291 / W).